The primary structure comprises 377 residues: Aquaporin-2 (377 aa).

Residues 1 to 14 (MAANKGINGGIKNH) lie on the Cytoplasmic side of the membrane. A helical transmembrane segment spans residues 15–35 (FIAFLGEFVGTFLFLFFAYGG). Residues 36–56 (TQTANQTSQKNPSIVASPDIN) are Extracellular-facing. Asn40 is a glycosylation site (N-linked (GlcNAc...) asparagine). The helical transmembrane segment at 57–77 (QLLYIALIFGFSLTVNVWIFF) threads the bilayer. Topologically, residues 78 to 87 (RVSGGLFNPA) are cytoplasmic. Positions 85-87 (NPA) match the NPA 1 motif. Residues 88–108 (VTIALCLVGVVGPVRSIFIFI) traverse the membrane as a helical segment. The Extracellular portion of the chain corresponds to 109 to 144 (AQVVASIAAAAAVRGLLPGDTVLFSCALAPGTSIAQ). Residues 145–165 (GLFLEMFFTIELVFTILMLAA) traverse the membrane as a helical segment. The Cytoplasmic segment spans residues 166 to 171 (EKTKVT). The chain crosses the membrane as a helical span at residues 172–192 (FVAPVGIGLSLFVAELMGVAW). Residues 193–215 (TGGALNPARAFGAEVIGGFRGYH) lie on the Extracellular side of the membrane. An NPA 2 motif is present at residues 198 to 200 (NPA). The helical transmembrane segment at 216–236 (WIYWLGPLMGAVLAAGFYKVI) threads the bilayer. Over 237 to 377 (KFLNYEQVNG…ANAQNRAKTP (141 aa)) the chain is Cytoplasmic. Disordered stretches follow at residues 278–332 (LFQT…RENE) and 358–377 (RLSG…AKTP). Composition is skewed to polar residues over residues 315 to 328 (PAQQ…ASTI) and 368 to 377 (ANAQNRAKTP).

This sequence belongs to the MIP/aquaporin (TC 1.A.8) family.

The protein localises to the membrane. The catalysed reaction is H2O(in) = H2O(out). It catalyses the reaction glycerol(in) = glycerol(out). In terms of biological role, water channel required to facilitate the transport of water across membranes. Involved in conidiation. This Botryotinia fuckeliana (strain B05.10) (Noble rot fungus) protein is Aquaporin-2.